A 106-amino-acid chain; its full sequence is MDLETRVSGHEKPQRRNPEDPDCQYAKTRSSPCKPLGRFEEVASRTSAGSWTHQNGFGDTSLFEIYSNQAITGPYQQMGFRGEKRGYGNNKEVQERSCCHVENNQC.

Basic and acidic residues predominate over residues 1-19 (MDLETRVSGHEKPQRRNPE). Residues 1–31 (MDLETRVSGHEKPQRRNPEDPDCQYAKTRSS) are disordered.

The protein resides in the host cytoplasm. It is found in the host cytoskeleton. Its function is as follows. Plays a role in viral replication. This is uORF protein from Zika virus (ZIKV).